A 397-amino-acid polypeptide reads, in one-letter code: Phosphoglycerate kinase (397 aa).

Residues 22–24, Arg38, 61–64, Arg119, and Arg152 contribute to the substrate site; these read DYN and HLGR. ATP-binding positions include Lys203, Gly294, Glu325, and 351-354; that span reads GGDT.

It belongs to the phosphoglycerate kinase family. As to quaternary structure, monomer.

The protein resides in the cytoplasm. It carries out the reaction (2R)-3-phosphoglycerate + ATP = (2R)-3-phospho-glyceroyl phosphate + ADP. It participates in carbohydrate degradation; glycolysis; pyruvate from D-glyceraldehyde 3-phosphate: step 2/5. The chain is Phosphoglycerate kinase (pgk) from Aquifex aeolicus (strain VF5).